A 772-amino-acid chain; its full sequence is Endoplasmic reticulum membrane sensor NFE2L1 (772 aa).

Residues 7–24 (YLTEGLLQFTILLSLIGV) form a helical; Signal-anchor for type II membrane protein membrane-spanning segment. The segment at 108–148 (DPEGSVSGSQPNSGLALESSSGLQDVTGPDNGVRESETEQG) is disordered. The segment covering 113–131 (VSGSQPNSGLALESSSGLQ) has biased composition (polar residues). Residues 191-199 (VFDYSHRQK) form a cholesterol recognition/amino acid consensus (CRAC) region region. N-linked (GlcNAc...) asparagine glycans are attached at residues asparagine 348 and asparagine 360. The interval 379–383 (SPEVE) is CPD. 2 N-linked (GlcNAc...) asparagine glycosylation sites follow: asparagine 412 and asparagine 423. Disordered regions lie at residues 470-532 (EEEF…DSET) and 582-613 (SALD…QMSR). A Destruction motif motif is present at residues 476–480 (DSGLS). Low complexity predominate over residues 476–523 (DSGLSLDSSHSPSSLSSSEGSSSSSSSSSSSSSSASSSASSSFSEEGA). Serine 528 is subject to Phosphoserine; by CK2. The segment covering 598-613 (GSKEKQADFLDKQMSR) has biased composition (basic and acidic residues). A Phosphoserine; by PKA modification is found at serine 599. The region spanning 654–717 (LIRDIRRRGK…RQMKQKVQSL (64 aa)) is the bZIP domain. The segment at 656-675 (RDIRRRGKNKMAAQNCRKRK) is basic motif. Residues 682–696 (LERDVEDLQRDKARL) are leucine-zipper.

This sequence belongs to the bZIP family. CNC subfamily. In terms of assembly, interacts with KEAP1. As to quaternary structure, interacts (via CPD region) with FBXW7; leading to its ubiquitination and degradation. Interacts with SYVN1/HRD1; leading to its ubiquitination and degradation. Interacts (when ubiquitinated) with DDI2; leading to its cleavage. Interacts (via the bZIP domain) with small MAF protein (MAFF, MAFG or MAFK); required for binding to antioxidant response elements (AREs) on DNA. Interacts (via Destruction motif) with BTRC; leading to its ubiquitination and degradation. Interacts with CEBPB; the heterodimer represses expression of DSPP during odontoblast differentiation. Interacts with MOTS-c, a peptide produced by the mitochondrially encoded 12S rRNA MT-RNR1. Post-translationally, cleaved at Leu-104 by the aspartyl protease DDI2 following retrotranslocation, releasing the protein from the endoplasmic reticulum membrane and forming the transcription factor NRF1 that translocates into the nucleus. Ubiquitination is prerequisite for cleavage by aspartyl protease DDI2. In terms of processing, N-glycosylated in normal conditions, when it has a single-pass type II membrane protein topology, with the DNA-binding domain facing the endoplasmic reticulum lumen. Deglycosylated during retrotranslocation to the cytosolic side of the membrane, to have a single-pass type III membrane protein topology with the major part of the protein facing the cytosol. Ubiquitinated by the SCF(FBXW7) complex and SYVN1/HRD1, leading to its degradation by the proteasome. Ubiquitinated during retrotranslocation to the cytosolic side of the membrane: ubiquitination does not lead to degradation and is required for processing by the aspartyl protease DDI2 and subsequent release from the endoplasmic reticulum membrane. Post-translationally, phosphorylation by CK2 at Ser-528 inhibits transcription factor activity, possibly by affecting DNA-binding activity. Phosphorylation at Ser-599 is required for interaction with CEBPB. In terms of processing, ubiquitinated by the SCF(BTRC) complex in the nucleus, leading to its degradation by the proteasome.

The protein localises to the endoplasmic reticulum membrane. The protein resides in the nucleus. Its function is as follows. Endoplasmic reticulum membrane sensor that translocates into the nucleus in response to various stresses to act as a transcription factor. Constitutes a precursor of the transcription factor NRF1. Able to detect various cellular stresses, such as cholesterol excess, oxidative stress or proteasome inhibition. In response to stress, it is released from the endoplasmic reticulum membrane following cleavage by the protease DDI2 and translocates into the nucleus to form the transcription factor NRF1. Acts as a key sensor of cholesterol excess: in excess cholesterol conditions, the endoplasmic reticulum membrane form of the protein directly binds cholesterol via its CRAC motif, preventing cleavage and release of the transcription factor NRF1, thereby allowing expression of genes promoting cholesterol removal, such as CD36. Involved in proteasome homeostasis: in response to proteasome inhibition, it is released from the endoplasmic reticulum membrane, translocates to the nucleus and activates expression of genes encoding proteasome subunits. CNC-type bZIP family transcription factor that translocates to the nucleus and regulates expression of target genes in response to various stresses. Heterodimerizes with small-Maf proteins (MAFF, MAFG or MAFK) and binds DNA motifs including the antioxidant response elements (AREs), which regulate expression of genes involved in oxidative stress response. Activates or represses expression of target genes, depending on the context. Plays a key role in cholesterol homeostasis by acting as a sensor of cholesterol excess: in low cholesterol conditions, translocates into the nucleus and represses expression of genes involved in defense against cholesterol excess, such as CD36. In excess cholesterol conditions, the endoplasmic reticulum membrane form of the protein directly binds cholesterol via its CRAC motif, preventing cleavage and release of the transcription factor NRF1, thereby allowing expression of genes promoting cholesterol removal. Critical for redox balance in response to oxidative stress: acts by binding the AREs motifs on promoters and mediating activation of oxidative stress response genes, such as GCLC, GCLM, GSS, MT1 and MT2. Plays an essential role during fetal liver hematopoiesis: probably has a protective function against oxidative stress and is involved in lipid homeostasis in the liver. Involved in proteasome homeostasis: in response to proteasome inhibition, mediates the 'bounce-back' of proteasome subunits by translocating into the nucleus and activating expression of genes encoding proteasome subunits. Also involved in regulating glucose flux. Together with CEBPB; represses expression of DSPP during odontoblast differentiation. In response to ascorbic acid induction, activates expression of SP7/Osterix in osteoblasts. The sequence is that of Endoplasmic reticulum membrane sensor NFE2L1 (NFE2L1) from Homo sapiens (Human).